Consider the following 154-residue polypeptide: Hemiasterlin resistant protein 1 (154 aa).

Disordered regions lie at residues 1-64 (MVRR…PGLM) and 86-109 (GMFTGGGSSHAEQAPAAAAAPAGA). Low complexity-rich tracts occupy residues 7–28 (ASPSPSAPVRSAPRPAAQSSFA), 48–57 (TPMGAPMGAP), and 96–109 (AEQAPAAAAAPAGA). In terms of domain architecture, CHCH spans 116–154 (SQPCEFEWRQFVDCAQNQSDVSLCNGFNDIFKQCKARYA). 2 short sequence motifs (cx9C motif) span residues 119–129 (CEFEWRQFVDC) and 139–149 (CNGFNDIFKQC). Cystine bridges form between Cys119/Cys149 and Cys129/Cys139.

The protein is Hemiasterlin resistant protein 1 (har-1) of Caenorhabditis elegans.